The primary structure comprises 440 residues: Beta-1,3-galactosyl-O-glycosyl-glycoprotein beta-1,6-N-acetylglucosaminyltransferase (440 aa).

The Cytoplasmic segment spans residues M1 to R12. Residues G13 to L30 traverse the membrane as a helical; Signal-anchor for type II membrane protein segment. The Lumenal segment spans residues R31–L440. N-linked (GlcNAc...) asparagine; by host glycans are attached at residues N72 and N108. 4 disulfide bridges follow: C73-C230, C164-C384, C185-C212, and C393-C425.

Belongs to the glycosyltransferase 14 family.

The protein resides in the host Golgi apparatus membrane. It carries out the reaction a 3-O-[beta-D-galactosyl-(1-&gt;3)-N-acetyl-alpha-D-galactosaminyl]-L-seryl-[protein] + UDP-N-acetyl-alpha-D-glucosamine = 3-O-{beta-D-galactosyl-(1-&gt;3)-[N-acetyl-beta-D-glucosaminyl-(1-&gt;6)]-N-acetyl-alpha-D-galactosaminyl}-L-seryl-[protein] + UDP + H(+). It catalyses the reaction a 3-O-[beta-D-galactosyl-(1-&gt;3)-N-acetyl-alpha-D-galactosaminyl]-L-threonyl-[protein] + UDP-N-acetyl-alpha-D-glucosamine = a 3-O-{beta-D-galactosyl-(1-&gt;3)-[N-acetyl-beta-D-glucosaminyl-(1-&gt;6)]-N-acetyl-alpha-D-galactosaminyl}-L-threonyl-[protein] + UDP + H(+). The catalysed reaction is a beta-D-Gal-(1-&gt;4)-beta-D-GlcNAc-(1-&gt;3)-beta-D-Gal-(1-&gt;4)-beta-D-GlcNAc derivative + UDP-N-acetyl-alpha-D-glucosamine = a beta-D-Gal-(1-&gt;4)-beta-D-GlcNAc-(1-&gt;3)-[beta-D-GlcNAc-(1-&gt;6)]-beta-D-Gal-(1-&gt;4)-N-acetyl-beta-D-glucosaminyl derivative + UDP + H(+). The enzyme catalyses 3-O-[N-acetyl-beta-D-glucosaminyl-(1-&gt;3)-N-acetyl-alpha-D-galactosaminyl]-L-seryl-[protein] + UDP-N-acetyl-alpha-D-glucosamine = 3-O-[N-acetyl-beta-D-glucosaminyl-(1-&gt;3)-[N-acetyl-beta-D-glucosaminyl-(1-&gt;6)]-N-acetyl-alpha-D-galactosaminyl]-L-seryl-[protein] + UDP + H(+). It carries out the reaction a 3-O-[N-acetyl-beta-D-glucosaminyl-(1-&gt;3)-N-acetyl-alpha-D-galactosaminyl]-L-threonyl-[protein] + UDP-N-acetyl-alpha-D-glucosamine = 3-O-[N-acetyl-beta-D-glucosaminyl-(1-&gt;3)-[N-acetyl-beta-D-glucosaminyl-(1-&gt;6)]-N-acetyl-alpha-D-galactosaminyl]-L-threonyl-[protein] + UDP + H(+). Its pathway is protein modification; protein glycosylation. In terms of biological role, non-essential glycosyltransferase that can synthesize all known mucin beta 6 N-acetylglucosaminides. Mediates core 2 and core 4 O-glycan branching, 2 important steps in mucin-type biosynthesis. Has also I-branching enzyme activity by converting linear into branched poly-N-acetyllactosaminoglycans. Contributes to the post-translational modifications of structural proteins. The protein is Beta-1,3-galactosyl-O-glycosyl-glycoprotein beta-1,6-N-acetylglucosaminyltransferase (Bo17) of Bos taurus (Bovine).